We begin with the raw amino-acid sequence, 192 residues long: Pyridoxal 5'-phosphate synthase subunit PdxT (192 aa).

47-49 (GES) contributes to the L-glutamine binding site. The Nucleophile role is filled by C78. Residues R105 and 139–140 (IR) contribute to the L-glutamine site. Catalysis depends on charge relay system residues H175 and E177.

The protein belongs to the glutaminase PdxT/SNO family. In terms of assembly, in the presence of PdxS, forms a dodecamer of heterodimers. Only shows activity in the heterodimer.

The catalysed reaction is aldehydo-D-ribose 5-phosphate + D-glyceraldehyde 3-phosphate + L-glutamine = pyridoxal 5'-phosphate + L-glutamate + phosphate + 3 H2O + H(+). It catalyses the reaction L-glutamine + H2O = L-glutamate + NH4(+). It participates in cofactor biosynthesis; pyridoxal 5'-phosphate biosynthesis. Functionally, catalyzes the hydrolysis of glutamine to glutamate and ammonia as part of the biosynthesis of pyridoxal 5'-phosphate. The resulting ammonia molecule is channeled to the active site of PdxS. This is Pyridoxal 5'-phosphate synthase subunit PdxT from Solibacter usitatus (strain Ellin6076).